A 236-amino-acid polypeptide reads, in one-letter code: tRNA1(Val) (adenine(37)-N6)-methyltransferase (236 aa).

The protein belongs to the methyltransferase superfamily. tRNA (adenine-N(6)-)-methyltransferase family.

Its subcellular location is the cytoplasm. It carries out the reaction adenosine(37) in tRNA1(Val) + S-adenosyl-L-methionine = N(6)-methyladenosine(37) in tRNA1(Val) + S-adenosyl-L-homocysteine + H(+). Its function is as follows. Specifically methylates the adenine in position 37 of tRNA(1)(Val) (anticodon cmo5UAC). The sequence is that of tRNA1(Val) (adenine(37)-N6)-methyltransferase from Shewanella sp. (strain MR-4).